Consider the following 85-residue polypeptide: Small ribosomal subunit protein uS17 (85 aa).

This sequence belongs to the universal ribosomal protein uS17 family. In terms of assembly, part of the 30S ribosomal subunit.

In terms of biological role, one of the primary rRNA binding proteins, it binds specifically to the 5'-end of 16S ribosomal RNA. In Mycoplasma pneumoniae (strain ATCC 29342 / M129 / Subtype 1) (Mycoplasmoides pneumoniae), this protein is Small ribosomal subunit protein uS17.